We begin with the raw amino-acid sequence, 466 residues long: Ribulose bisphosphate carboxylase large chain (466 aa).

Residue K5 is modified to N6,N6,N6-trimethyllysine. 2 residues coordinate substrate: N114 and T164. K166 (proton acceptor) is an active-site residue. K168 serves as a coordination point for substrate. Mg(2+) is bound by residues K192, D194, and E195. K192 carries the post-translational modification N6-carboxylysine. Catalysis depends on H285, which acts as the Proton acceptor. 3 residues coordinate substrate: R286, H318, and S370.

It belongs to the RuBisCO large chain family. Type I subfamily. Heterohexadecamer of 8 large chains and 8 small chains; disulfide-linked. The disulfide link is formed within the large subunit homodimers. The cofactor is Mg(2+). In terms of processing, the disulfide bond which can form in the large chain dimeric partners within the hexadecamer appears to be associated with oxidative stress and protein turnover.

It localises to the plastid. It is found in the chloroplast. The enzyme catalyses 2 (2R)-3-phosphoglycerate + 2 H(+) = D-ribulose 1,5-bisphosphate + CO2 + H2O. The catalysed reaction is D-ribulose 1,5-bisphosphate + O2 = 2-phosphoglycolate + (2R)-3-phosphoglycerate + 2 H(+). In terms of biological role, ruBisCO catalyzes two reactions: the carboxylation of D-ribulose 1,5-bisphosphate, the primary event in carbon dioxide fixation, as well as the oxidative fragmentation of the pentose substrate in the photorespiration process. Both reactions occur simultaneously and in competition at the same active site. The sequence is that of Ribulose bisphosphate carboxylase large chain from Cucurbita pepo (Vegetable marrow).